The primary structure comprises 185 residues: Sarcoplasmic calcium-binding proteins I, III, and IV (185 aa).

EF-hand domains are found at residues 5–41 (FQKQ…YKEV), 57–92 (SLED…TIAT), 102–137 (WCQN…FQLQ), and 138–173 (CADV…TSPA). 13 residues coordinate Ca(2+): aspartate 19, asparagine 21, aspartate 23, serine 25, aspartate 30, aspartate 70, asparagine 72, aspartate 74, glutamate 81, aspartate 115, serine 117, aspartate 119, and glutamate 126.

In terms of biological role, like parvalbumins, SCPs seem to be more abundant in fast contracting muscles, but no functional relationship can be established from this distribution. The chain is Sarcoplasmic calcium-binding proteins I, III, and IV from Branchiostoma lanceolatum (Common lancelet).